We begin with the raw amino-acid sequence, 268 residues long: Indole-3-glycerol phosphate synthase (268 aa).

The protein belongs to the TrpC family.

The catalysed reaction is 1-(2-carboxyphenylamino)-1-deoxy-D-ribulose 5-phosphate + H(+) = (1S,2R)-1-C-(indol-3-yl)glycerol 3-phosphate + CO2 + H2O. It participates in amino-acid biosynthesis; L-tryptophan biosynthesis; L-tryptophan from chorismate: step 4/5. The polypeptide is Indole-3-glycerol phosphate synthase (Lachnospira eligens (strain ATCC 27750 / DSM 3376 / VPI C15-48 / C15-B4) (Eubacterium eligens)).